The following is a 141-amino-acid chain: Protein NrdI (141 aa).

It belongs to the NrdI family.

Functionally, probably involved in ribonucleotide reductase function. This Wigglesworthia glossinidia brevipalpis protein is Protein NrdI.